A 342-amino-acid chain; its full sequence is MTDRYILAVESSCDETSVAILKNESTLLSNVIASQVESHKRFGGVVPEVASRHHVEVITTCFEDALQEAGISASDLSAVAVTYGPGLVGALLVGLAAAKAFAWANHLPLIPVNHMAGHLMAAREQKPLVYPLIALLVSGGHTELVYVPEPGDYHIIGETRDDAVGEAYDKVGRVMGLTYPAGREIDQLAHKGQDTYHFPRAMITEDHLEFSFSGLKSAFINLHHNAKQKGDELILEDLCASFQAAVLDILLAKTKKALSRYPAKMLVVAGGVAANQGLRDRLTQEITHIEVVIPKLRLCGDNAGMIALAAAIEYDKQHFANMSLNAKPSLAFDQFPDSFVIN.

Fe cation is bound by residues His114 and His118. Substrate-binding positions include 136–140, Asp169, Gly182, Asp186, and Asn275; that span reads LVSGG. Asp301 is a Fe cation binding site.

The protein belongs to the KAE1 / TsaD family. It depends on Fe(2+) as a cofactor.

It localises to the cytoplasm. It catalyses the reaction L-threonylcarbamoyladenylate + adenosine(37) in tRNA = N(6)-L-threonylcarbamoyladenosine(37) in tRNA + AMP + H(+). Functionally, required for the formation of a threonylcarbamoyl group on adenosine at position 37 (t(6)A37) in tRNAs that read codons beginning with adenine. Is involved in the transfer of the threonylcarbamoyl moiety of threonylcarbamoyl-AMP (TC-AMP) to the N6 group of A37, together with TsaE and TsaB. TsaD likely plays a direct catalytic role in this reaction. This chain is tRNA N6-adenosine threonylcarbamoyltransferase, found in Streptococcus pyogenes serotype M2 (strain MGAS10270).